A 719-amino-acid chain; its full sequence is Lanosterol synthase (719 aa).

A PFTB 1 repeat occupies 118–160; sequence RIEVIRYLVNHANPEDGGWGIHIEGKSTVFGTALNYVVLRILG. Residue aspartate 451 is the Proton donor of the active site. PFTB repeat units lie at residues 478–523, 555–595, and 604–645; these read LKDS…MIEH, VKNA…SCVK, and SRRA…VVQT.

The protein belongs to the terpene cyclase/mutase family.

The catalysed reaction is (S)-2,3-epoxysqualene = lanosterol. It participates in terpene metabolism; lanosterol biosynthesis; lanosterol from farnesyl diphosphate: step 3/3. In terms of biological role, catalyzes the cyclization of (S)-2,3 oxidosqualene to lanosterol, a reaction that forms the sterol nucleus. The polypeptide is Lanosterol synthase (ERG7) (Pneumocystis carinii).